The chain runs to 501 residues: Aldehyde dehydrogenase, cytosolic 1 (501 aa).

Ser2 bears the N-acetylserine mark. An N6-acetyllysine mark is found at Lys91 and Lys128. Position 246 to 251 (246 to 251) interacts with NAD(+); that stretch reads GSTEVG. Lys252 bears the N6-acetyllysine mark. The Proton acceptor role is filled by Glu269. Cys303 acts as the Nucleophile in catalysis. 3 positions are modified to N6-acetyllysine: Lys353, Lys367, and Lys410. A Phosphoserine modification is found at Ser413. Lys419 and Lys435 each carry N6-acetyllysine.

It belongs to the aldehyde dehydrogenase family. In terms of assembly, homotetramer. Highest level in liver, high level in lung, low level in kidney and testis.

Its subcellular location is the cytoplasm. The catalysed reaction is an aldehyde + NAD(+) + H2O = a carboxylate + NADH + 2 H(+). Its pathway is alcohol metabolism; ethanol degradation; acetate from ethanol: step 2/2. Its function is as follows. Can oxidize benzaldehyde, propionaldehyde and acetaldehyde. No detectable activity with retinal. This Mus musculus (Mouse) protein is Aldehyde dehydrogenase, cytosolic 1.